A 569-amino-acid polypeptide reads, in one-letter code: AP-4 complex accessory subunit Tepsin (569 aa).

The 134-residue stretch at arginine 8–serine 141 folds into the ENTH domain. A disordered region spans residues valine 196–leucine 298. Residues valine 219 to asparagine 229 are compositionally biased toward polar residues. The span at serine 260–serine 292 shows a compositional bias: low complexity. At serine 400 the chain carries Phosphoserine. Positions valine 467–serine 524 are disordered. Pro residues predominate over residues serine 470–leucine 480. The segment covering leucine 494 to glutamate 505 has biased composition (polar residues). A compositionally biased stretch (basic and acidic residues) spans glutamine 506–lysine 515. The segment at proline 525 to valine 535 is interaction with AP4B1. Residues serine 559–methionine 569 are interaction with AP4E1.

In terms of assembly, interacts with AP4B1 and AP4E1; the interaction is direct and mediates the association of TEPSIN with the adapter-like complex 4 (AP-4), a heterotetramer composed of AP4B1, AP4E1, AP4M1 and AP4S1.

It is found in the golgi apparatus. The protein localises to the trans-Golgi network membrane. The protein resides in the cytoplasmic vesicle. Its subcellular location is the cytoplasm. It localises to the cytosol. Its function is as follows. Associates with the adapter-like complex 4 (AP-4) and may therefore play a role in vesicular trafficking of proteins at the trans-Golgi network. The chain is AP-4 complex accessory subunit Tepsin from Rattus norvegicus (Rat).